We begin with the raw amino-acid sequence, 100 residues long: Nucleoid-associated protein Cagg_3200 (100 aa).

The protein belongs to the YbaB/EbfC family. Homodimer.

It localises to the cytoplasm. It is found in the nucleoid. Functionally, binds to DNA and alters its conformation. May be involved in regulation of gene expression, nucleoid organization and DNA protection. The chain is Nucleoid-associated protein Cagg_3200 from Chloroflexus aggregans (strain MD-66 / DSM 9485).